The following is a 607-amino-acid chain: Type 3 secretion system secretin (607 aa).

Positions 1-33 (MAPACTTAHRRRAPLAAVLMLSLLPLLSPHADA) are cleaved as a signal peptide. The disordered stretch occupies residues 277–332 (ASSSDRVPVSPPLPGSGAAAAAGSPASVWPELSKGRRDESNPIDAGGGAELASDAP). A compositionally biased stretch (low complexity) spans 291–306 (GSGAAAAAGSPASVWP).

It belongs to the bacterial secretin family. T3SS SctC subfamily. In terms of assembly, the core secretion machinery of the T3SS is composed of approximately 20 different proteins, including cytoplasmic components, a base, an export apparatus and a needle. This subunit is part of the base, which anchors the injectisome in the bacterial cell envelope. Forms a stable homooligomeric complex.

The protein localises to the cell outer membrane. Its function is as follows. Component of the type III secretion system (T3SS), also called injectisome, which is used to inject bacterial effector proteins into eukaryotic host cells. Forms a ring-shaped multimeric structure with an apparent central pore in the outer membrane. Necessary for both basic pathogenicity and the induction of the hypersensitive response in resistant plants. This chain is Type 3 secretion system secretin, found in Xanthomonas euvesicatoria.